Reading from the N-terminus, the 275-residue chain is Elongation factor Ts (275 aa).

The interval 76 to 79 is involved in Mg(2+) ion dislocation from EF-Tu; the sequence is TDFV.

This sequence belongs to the EF-Ts family.

It localises to the cytoplasm. In terms of biological role, associates with the EF-Tu.GDP complex and induces the exchange of GDP to GTP. It remains bound to the aminoacyl-tRNA.EF-Tu.GTP complex up to the GTP hydrolysis stage on the ribosome. The protein is Elongation factor Ts of Nocardia farcinica (strain IFM 10152).